Reading from the N-terminus, the 382-residue chain is V-type proton ATPase subunit C 1 (382 aa).

An N-acetylthreonine modification is found at Thr-2.

This sequence belongs to the V-ATPase C subunit family. As to quaternary structure, V-ATPase is a heteromultimeric enzyme made up of two complexes: the ATP-hydrolytic V1 complex and the proton translocation V0 complex. The V1 complex consists of three catalytic AB heterodimers that form a heterohexamer, three peripheral stalks each consisting of EG heterodimers, one central rotor including subunits D and F, and the regulatory subunits C and H. The proton translocation complex V0 consists of the proton transport subunit a, a ring of proteolipid subunits c9c'', rotary subunit d, subunits e and f, and the accessory subunits ATP6AP1/Ac45 and ATP6AP2/PRR. As to expression, expressed in brain (at protein level).

The protein resides in the cytoplasmic vesicle. Its subcellular location is the secretory vesicle. It localises to the synaptic vesicle membrane. The protein localises to the clathrin-coated vesicle membrane. Its function is as follows. Subunit of the V1 complex of vacuolar(H+)-ATPase (V-ATPase), a multisubunit enzyme composed of a peripheral complex (V1) that hydrolyzes ATP and a membrane integral complex (V0) that translocates protons. V-ATPase is responsible for acidifying and maintaining the pH of intracellular compartments and in some cell types, is targeted to the plasma membrane, where it is responsible for acidifying the extracellular environment. Subunit C is necessary for the assembly of the catalytic sector of the enzyme and is likely to have a specific function in its catalytic activity. This is V-type proton ATPase subunit C 1 (ATP6V1C1) from Bos taurus (Bovine).